The chain runs to 192 residues: MSKPSDRINLTNQFLIAMPNMADPTFSGTVVYLCDHSERGALGLVINRPTDIDLESLFNRIDLKLEIEPLLHIPVYFGGPVQTERGFVLHEPVEGANYSSSMSVEGGLEMTTSKDVLEAVATGTGPKRFLLTLGHAGWGAGQLEEEISRNGWLTVAADPRIVFDTPAEERFEAALGLLGVSSSTLSGEAGHA.

This sequence belongs to the UPF0301 (AlgH) family.

This Burkholderia multivorans (strain ATCC 17616 / 249) protein is UPF0301 protein Bmul_2524/BMULJ_00714.